The chain runs to 146 residues: Hemoglobin subunit beta (146 aa).

Residue Val-1 is modified to N-acetylvaline. Positions 2 to 146 (HLTADEKAAV…VATALAHKYH (145 aa)) constitute a Globin domain. A Phosphoserine modification is found at Ser-44. Lys-59 is modified (N6-acetyllysine). His-63 lines the heme b pocket. Lys-82 carries the post-translational modification N6-acetyllysine. His-92 provides a ligand contact to heme b. Cys-93 bears the S-nitrosocysteine mark. Position 144 is an N6-acetyllysine (Lys-144).

Belongs to the globin family. Heterotetramer of two alpha chains and two beta chains. Red blood cells.

In terms of biological role, involved in oxygen transport from the lung to the various peripheral tissues. The polypeptide is Hemoglobin subunit beta (HBB) (Myotis velifer (Mouse-eared bat)).